A 499-amino-acid polypeptide reads, in one-letter code: Bifunctional purine biosynthesis protein PurH (499 aa).

One can recognise an MGS-like domain in the interval 1-144 (MIKRALISVF…KNFKDVVVLT (144 aa)).

This sequence belongs to the PurH family.

The catalysed reaction is (6R)-10-formyltetrahydrofolate + 5-amino-1-(5-phospho-beta-D-ribosyl)imidazole-4-carboxamide = 5-formamido-1-(5-phospho-D-ribosyl)imidazole-4-carboxamide + (6S)-5,6,7,8-tetrahydrofolate. It catalyses the reaction IMP + H2O = 5-formamido-1-(5-phospho-D-ribosyl)imidazole-4-carboxamide. The protein operates within purine metabolism; IMP biosynthesis via de novo pathway; 5-formamido-1-(5-phospho-D-ribosyl)imidazole-4-carboxamide from 5-amino-1-(5-phospho-D-ribosyl)imidazole-4-carboxamide (10-formyl THF route): step 1/1. It functions in the pathway purine metabolism; IMP biosynthesis via de novo pathway; IMP from 5-formamido-1-(5-phospho-D-ribosyl)imidazole-4-carboxamide: step 1/1. The polypeptide is Bifunctional purine biosynthesis protein PurH (Clostridium botulinum (strain Hall / ATCC 3502 / NCTC 13319 / Type A)).